We begin with the raw amino-acid sequence, 621 residues long: Rab11 family-interacting protein 4A (621 aa).

2 EF-hand domains span residues 14 to 49 and 47 to 82; these read AFLK…FGQG and GQGD…IKGC. D27, D29, D31, Y33, H38, D60, N62, R66, and D71 together coordinate Ca(2+). 2 disordered regions span residues 132–172 and 203–243; these read YSDE…KEEG and DYGE…GQTP. Residues 151-161 are compositionally biased toward low complexity; sequence AADSGAGSESS. The span at 162 to 172 shows a compositional bias: basic and acidic residues; sequence EGGRQDDKEEG. Residues 225–243 show a composition bias toward polar residues; sequence TNGFSDLGSSLPSSAGQTP. Residues 348 to 556 adopt a coiled-coil conformation; the sequence is DLKSKLKQEN…LNGQILSLSL (209 aa). One can recognise an FIP-RBD domain in the interval 558–620; it reads EAKNLFACHT…DHNPSILEIK (63 aa).

As to quaternary structure, homodimer. Forms a complex with Rab11 (rab11a or rab11b) and arf6. As to expression, isoform 1 is predominantly expressed in neural tissues. Isoform B is expressed ubiquitously. In the developing retina, it is expressed in progenitors throughout the retina at early stages and becomes restricted to the ganglion cell layer and ciliary marginal zone as differentiation proceeds.

It is found in the recycling endosome membrane. Its subcellular location is the cleavage furrow. The protein resides in the midbody. It localises to the cytoplasmic vesicle. Acts as a regulator of endocytic traffic by participating in membrane delivery. Required for the abscission step in cytokinesis, possibly by acting as an 'address tag' delivering recycling endosome membranes to the cleavage furrow during late cytokinesis. May play a role in differentiation during retinal development. This is Rab11 family-interacting protein 4A (rab11fip4a) from Danio rerio (Zebrafish).